We begin with the raw amino-acid sequence, 137 residues long: Large ribosomal subunit protein uL16 (137 aa).

This sequence belongs to the universal ribosomal protein uL16 family. In terms of assembly, part of the 50S ribosomal subunit.

Functionally, binds 23S rRNA and is also seen to make contacts with the A and possibly P site tRNAs. In Bradyrhizobium sp. (strain BTAi1 / ATCC BAA-1182), this protein is Large ribosomal subunit protein uL16.